Reading from the N-terminus, the 66-residue chain is MNLTFLGLCIACMGVSVGEGLLMNGLFKSVARQPDMLSEFRSLMFLGVAFIEGTFFVTLVFSFIIK.

Transmembrane regions (helical) follow at residues 3–23 and 45–65; these read LTFL…GLLM and FLGV…SFII.

The protein belongs to the ATPase C chain family. In terms of assembly, F-type ATPases have 2 components, F(1) - the catalytic core - and F(0) - the membrane proton channel. F(1) has five subunits: alpha(3), beta(3), gamma(1), delta(1), epsilon(1). F(0) has three main subunits: a(1), b(2) and c(10-14). The alpha and beta chains form an alternating ring which encloses part of the gamma chain. F(1) is attached to F(0) by a central stalk formed by the gamma and epsilon chains, while a peripheral stalk is formed by the delta and b chains.

The protein resides in the cell membrane. F(1)F(0) ATP synthase produces ATP from ADP in the presence of a proton or sodium gradient. F-type ATPases consist of two structural domains, F(1) containing the extramembraneous catalytic core and F(0) containing the membrane proton channel, linked together by a central stalk and a peripheral stalk. During catalysis, ATP synthesis in the catalytic domain of F(1) is coupled via a rotary mechanism of the central stalk subunits to proton translocation. Functionally, key component of the F(0) channel; it plays a direct role in translocation across the membrane. A homomeric c-ring of between 10-14 subunits forms the central stalk rotor element with the F(1) delta and epsilon subunits. This is ATP synthase subunit c from Streptococcus pneumoniae serotype 19F (strain G54).